The following is a 106-amino-acid chain: Small ribosomal subunit protein uS10 (106 aa).

The protein belongs to the universal ribosomal protein uS10 family. In terms of assembly, part of the 30S ribosomal subunit.

In terms of biological role, involved in the binding of tRNA to the ribosomes. The polypeptide is Small ribosomal subunit protein uS10 (Prochlorococcus marinus (strain MIT 9211)).